The following is a 372-amino-acid chain: NAD(P)H-quinone oxidoreductase subunit 1 (372 aa).

Transmembrane regions (helical) follow at residues Leu-27–Val-47, Pro-65–Phe-85, Trp-97–Val-117, Leu-128–Met-148, Leu-176–Val-196, Ile-204–Leu-224, Phe-254–Val-274, Val-308–Leu-328, and Phe-347–Pro-367.

It belongs to the complex I subunit 1 family. In terms of assembly, NDH-1 is composed of at least 11 different subunits.

The protein resides in the cellular thylakoid membrane. The enzyme catalyses a plastoquinone + NADH + (n+1) H(+)(in) = a plastoquinol + NAD(+) + n H(+)(out). It carries out the reaction a plastoquinone + NADPH + (n+1) H(+)(in) = a plastoquinol + NADP(+) + n H(+)(out). NDH-1 shuttles electrons from an unknown electron donor, via FMN and iron-sulfur (Fe-S) centers, to quinones in the respiratory and/or the photosynthetic chain. The immediate electron acceptor for the enzyme in this species is believed to be plastoquinone. Couples the redox reaction to proton translocation, and thus conserves the redox energy in a proton gradient. This is NAD(P)H-quinone oxidoreductase subunit 1 from Thermosynechococcus vestitus (strain NIES-2133 / IAM M-273 / BP-1).